Consider the following 259-residue polypeptide: 3-deoxy-manno-octulosonate cytidylyltransferase (259 aa).

This sequence belongs to the KdsB family.

The protein resides in the cytoplasm. It catalyses the reaction 3-deoxy-alpha-D-manno-oct-2-ulosonate + CTP = CMP-3-deoxy-beta-D-manno-octulosonate + diphosphate. It functions in the pathway nucleotide-sugar biosynthesis; CMP-3-deoxy-D-manno-octulosonate biosynthesis; CMP-3-deoxy-D-manno-octulosonate from 3-deoxy-D-manno-octulosonate and CTP: step 1/1. It participates in bacterial outer membrane biogenesis; lipopolysaccharide biosynthesis. Activates KDO (a required 8-carbon sugar) for incorporation into bacterial lipopolysaccharide in Gram-negative bacteria. This is 3-deoxy-manno-octulosonate cytidylyltransferase from Xanthomonas euvesicatoria pv. vesicatoria (strain 85-10) (Xanthomonas campestris pv. vesicatoria).